A 591-amino-acid polypeptide reads, in one-letter code: uncharacterized protein (591 aa).

The first 30 residues, 1-30, serve as a signal peptide directing secretion; sequence MGKLLFGKLVFKKSLFLLSGMSSLAVFLTA. The N-palmitoyl cysteine moiety is linked to residue Cys-31. The S-diacylglycerol cysteine moiety is linked to residue Cys-31. Over residues 476–488 the composition is skewed to basic and acidic residues; sequence KKKLSEVATKKNE. Disordered regions lie at residues 476–497 and 510–535; these read KKKLSEVATKKNENGSTKNGSN and SSSSTSMRNGSSDSNQQNFKTTDNDG. Residues 510–523 show a composition bias toward low complexity; that stretch reads SSSSTSMRNGSSDS.

This sequence to T.pallidum TmpC.

It localises to the cell membrane. This is an uncharacterized protein from Mycoplasma genitalium (strain ATCC 33530 / DSM 19775 / NCTC 10195 / G37) (Mycoplasmoides genitalium).